We begin with the raw amino-acid sequence, 173 residues long: Protein SHI RELATED SEQUENCE 8 (173 aa).

Positions 52, 63, 68, 72, and 79 each coordinate Zn(2+). Residues 52–79 constitute a DNA-binding region (zn(2)-C6 fungal-type; degenerate); the sequence is CQDFGNQAKKDCSHMRCRTCCKSRGFEC. The span at 100–110 shows a compositional bias: low complexity; the sequence is LATVQPQTQLP. Positions 100–121 are disordered; sequence LATVQPQTQLPRGESVPKRHRE.

This sequence belongs to the SHI protein family.

It localises to the nucleus. In terms of biological role, transcription activator that binds DNA on 5'-ACTCTAC-3' and promotes auxin homeostasis-regulating gene expression (e.g. YUC genes), as well as genes affecting stamen development, cell expansion and timing of flowering. Synergistically with other SHI-related proteins, regulates gynoecium, stamen and leaf development in a dose-dependent manner, controlling apical-basal patterning. Promotes style and stigma formation, and influence vascular development during gynoecium development. May also have a role in the formation and/or maintenance of the shoot apical meristem (SAM). The chain is Protein SHI RELATED SEQUENCE 8 (SRS8) from Arabidopsis thaliana (Mouse-ear cress).